Consider the following 459-residue polypeptide: 11S globulin seed storage protein 2 (459 aa).

The signal sequence occupies residues 1 to 21; it reads MVAFKFLLALSLSLLVSAAIA. Disulfide bonds link C34–C67 and C110–C284. Cupin type-1 domains lie at 37-237 and 290-439; these read QRIS…ETIR and TNVE…NQAQ. The tract at residues 118–139 is disordered; it reads RSQRTMERTEASEQQDRGSVRD. The segment covering 121-139 has biased composition (basic and acidic residues); sequence RTMERTEASEQQDRGSVRD.

Belongs to the 11S seed storage protein (globulins) family. As to quaternary structure, homohexamer. Each subunit is composed of an acidic and a basic chain derived from a single precursor and linked by a disulfide bond. As to expression, expressed in seeds (at protein level). Expressed in seeds.

Seed storage protein. The polypeptide is 11S globulin seed storage protein 2 (Sesamum indicum (Oriental sesame)).